The sequence spans 300 residues: MAEKSTLAASSALHLSFPPAASGVFHSRSITAVKVHPVALFSILDHYLRRDVSQPRVIGTLLGTRSESEVEVRNAFAVPHGESQDPWQIHLDAEHHRRMLDLHLRVRPDEVVLGWYSTNTELNSNSALIQDHYSRETAPHQAIHLTLNTNVADEANGLGVQCYVSALLGAMAKPEDCAFLSLPTHLLMSTPEQTALRHLAAPKPQNITDLDALKASLEDVQAKLDRVLTYVRRVLAGEVEGDKAVGRYLSDTIGVVPAGLDESLLESLFQSHLQDVFMVSYLSKLVSAQAEMSTRLVLLT.

The 137-residue stretch at 33 to 169 (VKVHPVALFS…VQCYVSALLG (137 aa)) folds into the MPN domain.

The protein belongs to the eIF-3 subunit F family. As to quaternary structure, component of the eukaryotic translation initiation factor 3 (eIF-3) complex.

It is found in the cytoplasm. Its function is as follows. Component of the eukaryotic translation initiation factor 3 (eIF-3) complex, which is involved in protein synthesis of a specialized repertoire of mRNAs and, together with other initiation factors, stimulates binding of mRNA and methionyl-tRNAi to the 40S ribosome. The eIF-3 complex specifically targets and initiates translation of a subset of mRNAs involved in cell proliferation. In Malassezia globosa (strain ATCC MYA-4612 / CBS 7966) (Dandruff-associated fungus), this protein is Eukaryotic translation initiation factor 3 subunit F.